Here is a 1311-residue protein sequence, read N- to C-terminus: Cyclin-G-associated kinase (1311 aa).

Ser-2 is subject to N-acetylserine. A phosphoserine mark is found at Ser-2 and Ser-16. A Protein kinase domain is found at 40–314; that stretch reads LRVRRVLAEG…SIAEVVHQLQ (275 aa). Residue Asp-173 is the Proton acceptor of the active site. The Phosphatase tensin-type domain maps to 399-566; the sequence is SVANYAKGDL…EYMCDMVAEE (168 aa). Ser-456 carries the post-translational modification Phosphoserine. The C2 tensin-type domain maps to 572 to 710; the sequence is SKPILVRAVV…FQVNLEVEVE (139 aa). Disordered stretches follow at residues 709-729 and 749-788; these read VEPR…SMRG and FGKP…SADA. Residue Ser-770 is modified to Phosphoserine. Residues 770–788 are compositionally biased toward low complexity; it reads SPEAEPTDSDSPPSSSADA. Thr-776 carries the phosphothreonine modification. Phosphoserine is present on Ser-783. Phosphothreonine is present on Thr-794. Disordered regions lie at residues 801–860, 913–1035, and 1047–1150; these read KEAE…VQQD, CLLG…DLLG, and AVAP…PNYA. Phosphoserine is present on residues Ser-811, Ser-826, Ser-829, Ser-834, and Ser-939. Low complexity-rich tracts occupy residues 925–939 and 950–966; these read PPED…LLAS and PRGG…PLLP. 2 stretches are compositionally biased toward polar residues: residues 967-976 and 1070-1080; these read SSGNNSQPCS and SQASWTKSQNP. Ser-1096 bears the Phosphoserine mark. Polar residues predominate over residues 1109 to 1124; the sequence is TATTPKGSSSWQTSRP. Arg-1123 carries the omega-N-methylarginine modification. 2 positions are modified to phosphoserine: Ser-1176 and Ser-1185. A J domain is found at 1247 to 1311; sequence SRWTPVGMAD…FENQGSRPLF (65 aa).

It belongs to the protein kinase superfamily. Ser/Thr protein kinase family. Ubiquitous. Highest in testis.

Its subcellular location is the cytoplasm. It localises to the perinuclear region. It is found in the golgi apparatus. The protein localises to the trans-Golgi network. The protein resides in the cell junction. Its subcellular location is the focal adhesion. It localises to the cytoplasmic vesicle. It is found in the clathrin-coated vesicle. It carries out the reaction L-seryl-[protein] + ATP = O-phospho-L-seryl-[protein] + ADP + H(+). The enzyme catalyses L-threonyl-[protein] + ATP = O-phospho-L-threonyl-[protein] + ADP + H(+). In terms of biological role, associates with cyclin G and CDK5. Seems to act as an auxilin homolog that is involved in the uncoating of clathrin-coated vesicles by Hsc70 in non-neuronal cells. Expression oscillates slightly during the cell cycle, peaking at G1. May play a role in clathrin-mediated endocytosis and intracellular trafficking, and in the dynamics of clathrin assembly/disassembly. The chain is Cyclin-G-associated kinase from Homo sapiens (Human).